A 251-amino-acid polypeptide reads, in one-letter code: Probable transcriptional regulatory protein DehaBAV1_0421 (251 aa).

The protein belongs to the TACO1 family.

The protein resides in the cytoplasm. The polypeptide is Probable transcriptional regulatory protein DehaBAV1_0421 (Dehalococcoides mccartyi (strain ATCC BAA-2100 / JCM 16839 / KCTC 5957 / BAV1)).